The sequence spans 247 residues: Probable transcriptional regulatory protein SynWH7803_1972 (247 aa).

It belongs to the TACO1 family.

The protein resides in the cytoplasm. The polypeptide is Probable transcriptional regulatory protein SynWH7803_1972 (Synechococcus sp. (strain WH7803)).